The following is a 78-amino-acid chain: Large ribosomal subunit protein bL28 (78 aa).

Positions 1–22 (MAKVCQVTGKRPVTGHNVSHAK) are disordered.

The protein belongs to the bacterial ribosomal protein bL28 family.

The chain is Large ribosomal subunit protein bL28 from Saccharophagus degradans (strain 2-40 / ATCC 43961 / DSM 17024).